The following is a 189-amino-acid chain: Cancer/testis antigen family 45 member A2 (189 aa).

Belongs to the CT45 family. Testis specific. Expressed in cancer cell lines.

In Homo sapiens (Human), this protein is Cancer/testis antigen family 45 member A2.